The sequence spans 1151 residues: Elicitor of plant defense protein 1 (1151 aa).

Disordered stretches follow at residues 22–130 (YQDP…TLGE), 178–197 (ERIR…RSIK), and 236–255 (NYNS…DMHP). A compositionally biased stretch (acidic residues) spans 39–49 (IIEDGEPEDEW). Polar residues predominate over residues 64–99 (QNSASRLSKMSLTERFSIQTLDDTDGNTKSNRSSAT). Low complexity predominate over residues 104 to 122 (NPPDFSNGNDDSNGNSQNP). Basic and acidic residues predominate over residues 178 to 187 (ERIRAEESDS). One can recognise a uDENN domain in the interval 242-500 (PPPEPLNTDP…NLCTEAFNPL (259 aa)). In terms of domain architecture, cDENN spans 524–656 (EIPGSRTIDI…ARRKLMSLLQ (133 aa)). The dDENN domain occupies 658–1019 (AAPHKLRYGV…DREMQPANDA (362 aa)). 2 stretches are compositionally biased toward polar residues: residues 695-711 (STPK…SSSG) and 744-760 (TSKS…SPVS). The disordered stretch occupies residues 695 to 809 (STPKSTLGKW…SSSFGVDKHP (115 aa)). The span at 784–798 (LREKRSGHFGEEKMR) shows a compositional bias: basic and acidic residues. A Phorbol-ester/DAG-type zinc finger spans residues 886–934 (GHCFNYMPKDNTSMCTICNDLAEGDGVYRCTGCKIVSHGRCLGYCSLIC).

It belongs to the EPD1 elicitor family.

The protein resides in the secreted. It is found in the host cell. In terms of biological role, acts as an elicitor that triggers cell death and defense responses in the host plants. This chain is Elicitor of plant defense protein 1, found in Gibberella zeae (strain ATCC MYA-4620 / CBS 123657 / FGSC 9075 / NRRL 31084 / PH-1) (Wheat head blight fungus).